Consider the following 167-residue polypeptide: Glutathione peroxidase 1 (167 aa).

Cys41 is a catalytic residue.

It belongs to the glutathione peroxidase family.

It carries out the reaction 2 glutathione + H2O2 = glutathione disulfide + 2 H2O. Its function is as follows. May constitute a glutathione peroxidase-like protective system against oxidative stresses. In Helianthus annuus (Common sunflower), this protein is Glutathione peroxidase 1 (GPXHA-1).